A 41-amino-acid polypeptide reads, in one-letter code: Pi-stichotoxin-Hcr5b (41 aa).

3 cysteine pairs are disulfide-bonded: C4–C37, C6–C30, and C20–C38.

The protein belongs to the sea anemone type 3 (BDS) potassium channel toxin family.

The protein localises to the secreted. The protein resides in the nematocyst. Remarkably non-selective toxin, with activity on many different ion channels. Weakly and reversibly inhibits rat and human homomeric ASIC1 (isoform ASIC1a) (IC(50)=4.8 uM, and IC(50)=14.6 uM), and ASIC3 (IC(50)=15.9 uM). Molecular modeling interaction with ASIC1a suggests that this peptide hinders the collapse of acidic pockets and stabilizes nonconducting channels state. It activates several potassium channels including Kv1.1/KCNA1, Kv1.2/KCNA2, and drosophila Shaker IR. It moderately to potently inhibits potassium channels including Kv1.3/KCNA3, Kv1.4/KCNA4, Kv1.5/KCNA5, Kv1.6/KCNA6, Kv2.1/KCNB1, Kv4.2/KCND2, Kv7.1/KCNQ1, Kv7.2/Kv7.3 (KCNQ2/KCNQ3), Kv7.4/KCNQ4, hERG/KCNH2, and C.elegans QKT1. On sodium channels, it moderately to potently inhibits Nav1.1/SCN1A, Nav1.2/SCN2A, Nav1.3/SCN3A, Nav1.4/SCN4A, Nav1.5/SCN5A, Nav1.6/SCN8A, Nav1.7/SCN9A, Nav1.8/SCN10A, and B.germanica BgNav. It also moderately to potently inhibits Cav3.1/CACNA1G, Cav3.2/CACNA1H, and Cav3.3/CACNA1I. Significant shifts in the voltage-current relationship are observed on Kv and Nav, depending on the channel isoform, whereas the toxin does not seem to modulate the voltage-sensor domains of Cav channels, acting mainly as a pore blocker. Does not activate nicotinic acetylcholine receptors (nAChR), but potentiates ACh-elicited current of human alpha-7/CHRNA7 nAChR. Is also able to bind T.californica muscle-type nAChRs. In vivo, causes an excitatory effect in mice behavior. Also shows antihyperalgesic and analgesic activity in the acid-induced muscle pain mice model, and weak anti-inflammatory effect in models of acute local inflammation. This is Pi-stichotoxin-Hcr5b from Radianthus crispa (Leathery sea anemone).